Here is a 265-residue protein sequence, read N- to C-terminus: Palmitoyltransferase ZDHHC21 (265 aa).

At methionine 1–cysteine 16 the chain is on the cytoplasmic side. Residues methionine 17–phenylalanine 37 traverse the membrane as a helical segment. The Extracellular segment spans residues proline 38–histidine 44. The chain crosses the membrane as a helical span at residues isoleucine 45–valine 65. Residues arginine 66–tryptophan 133 lie on the Cytoplasmic side of the membrane. Residues glutamate 90–phenylalanine 140 enclose the DHHC domain. Cysteine 120 serves as the catalytic S-palmitoyl cysteine intermediate. A helical transmembrane segment spans residues leucine 134–phenylalanine 154. Residues cysteine 155 to phenylalanine 185 lie on the Extracellular side of the membrane. Residues methionine 186–isoleucine 206 form a helical membrane-spanning segment. Residues threonine 207 to valine 265 lie on the Cytoplasmic side of the membrane.

It belongs to the DHHC palmitoyltransferase family. In terms of tissue distribution, widely expressed.

It localises to the golgi apparatus membrane. The protein localises to the golgi apparatus. The protein resides in the cis-Golgi network membrane. Its subcellular location is the cell membrane. It carries out the reaction L-cysteinyl-[protein] + hexadecanoyl-CoA = S-hexadecanoyl-L-cysteinyl-[protein] + CoA. Its function is as follows. Palmitoyltransferase that catalyzes the addition of palmitate onto various protein substrates. Palmitoylates sex steroid hormone receptors, including ESR1, PGR and AR, thereby regulating their targeting to the plasma membrane. This affects rapid intracellular signaling by sex hormones via ERK and AKT kinases and the generation of cAMP, but does not affect that mediated by their nuclear receptor. Palmitoylates FYN, regulates its localization in hair follicles and plays a key role in epidermal homeostasis and hair follicle differentiation. Through the palmitoylation of PLCB1 and the regulation of PLCB1 downstream signaling may indirectly regulate the function of the endothelial barrier and the adhesion of leukocytes to the endothelium. Also has a palmitoyltransferase activity toward ADRA1D, positively regulating its activity and expression and may thereby play a role in vascular contraction. May also palmitoylate eNOS and LCK. The chain is Palmitoyltransferase ZDHHC21 from Homo sapiens (Human).